A 427-amino-acid chain; its full sequence is Interleukin-13 receptor subunit alpha-1 (427 aa).

The signal sequence occupies residues 1–21 (MEWPARLCGLWALLLCAGGGG). At 22 to 343 (GGGGAAPTET…MSIGKKRNST (322 aa)) the chain is on the extracellular side. Fibronectin type-III domains are found at residues 34-123 (PVTN…PPEG), 128-226 (AVTE…TSRV), and 227-339 (KPDP…IGKK). 2 N-linked (GlcNAc...) asparagine glycosylation sites follow: asparagine 37 and asparagine 61. Disulfide bonds link cysteine 62–cysteine 102, cysteine 95–cysteine 117, and cysteine 134–cysteine 144. N-linked (GlcNAc...) asparagine glycosylation is found at asparagine 105, asparagine 138, and asparagine 157. An intrachain disulfide couples cysteine 173 to cysteine 185. 5 N-linked (GlcNAc...) asparagine glycosylation sites follow: asparagine 235, asparagine 265, asparagine 293, asparagine 329, and asparagine 341. 2 disulfide bridges follow: cysteine 257-cysteine 320 and cysteine 282-cysteine 296. Residues 327 to 331 (WSNWS) carry the WSXWS motif motif. Residues 344–367 (LYITMLLIVPVIVAGAIIVLLLYL) form a helical membrane-spanning segment. Residues 368–427 (KRLKIIIFPPIPDPGKIFKEMFGDQNDDTLHWKKYDIYEKQTKEETDSVVLIENLKKASQ) are Cytoplasmic-facing. The Box 1 motif signature appears at 374–382 (IFPPIPDPG).

It belongs to the type I cytokine receptor family. Type 5 subfamily. As to quaternary structure, interleukin-13 receptor is a complex of IL4R, IL13RA1, and possibly other components. Interacts with TRAF3IP1. Interacts with IL4. In terms of tissue distribution, ubiquitous. Highest levels in heart, liver, skeletal muscle and ovary; lowest levels in brain, lung and kidney. Also found in B-cells, T-cells and endothelial cells.

The protein resides in the membrane. Functionally, binds with low affinity to interleukin-13 (IL13). Together with IL4RA can form a functional receptor for IL13. Also serves as an alternate accessory protein to the common cytokine receptor gamma chain for interleukin-4 (IL4) signaling, but cannot replace the function of IL2RG in allowing enhanced interleukin-2 (IL2) binding activity. The protein is Interleukin-13 receptor subunit alpha-1 (IL13RA1) of Homo sapiens (Human).